Consider the following 201-residue polypeptide: IMP cyclohydrolase (201 aa).

It belongs to the archaeal IMP cyclohydrolase family.

It catalyses the reaction IMP + H2O = 5-formamido-1-(5-phospho-D-ribosyl)imidazole-4-carboxamide. It functions in the pathway purine metabolism; IMP biosynthesis via de novo pathway; IMP from 5-formamido-1-(5-phospho-D-ribosyl)imidazole-4-carboxamide: step 1/1. Catalyzes the cyclization of 5-formylamidoimidazole-4-carboxamide ribonucleotide to IMP. In Methanococcus maripaludis (strain C6 / ATCC BAA-1332), this protein is IMP cyclohydrolase.